A 128-amino-acid polypeptide reads, in one-letter code: Large ribosomal subunit protein bL17 (128 aa).

This sequence belongs to the bacterial ribosomal protein bL17 family. Part of the 50S ribosomal subunit. Contacts protein L32.

This is Large ribosomal subunit protein bL17 from Erwinia tasmaniensis (strain DSM 17950 / CFBP 7177 / CIP 109463 / NCPPB 4357 / Et1/99).